A 290-amino-acid chain; its full sequence is Ribosomal RNA small subunit methyltransferase A (290 aa).

Residues N27, L29, G54, E75, D100, and N125 each contribute to the S-adenosyl-L-methionine site.

Belongs to the class I-like SAM-binding methyltransferase superfamily. rRNA adenine N(6)-methyltransferase family. RsmA subfamily.

Its subcellular location is the cytoplasm. It carries out the reaction adenosine(1518)/adenosine(1519) in 16S rRNA + 4 S-adenosyl-L-methionine = N(6)-dimethyladenosine(1518)/N(6)-dimethyladenosine(1519) in 16S rRNA + 4 S-adenosyl-L-homocysteine + 4 H(+). Its function is as follows. Specifically dimethylates two adjacent adenosines (A1518 and A1519) in the loop of a conserved hairpin near the 3'-end of 16S rRNA in the 30S particle. May play a critical role in biogenesis of 30S subunits. The sequence is that of Ribosomal RNA small subunit methyltransferase A from Streptococcus thermophilus (strain CNRZ 1066).